The following is a 302-amino-acid chain: Ribosomal RNA small subunit methyltransferase H (302 aa).

Residues 32 to 34 (GGH), Asp-51, Phe-78, Asp-97, and Gln-104 contribute to the S-adenosyl-L-methionine site.

It belongs to the methyltransferase superfamily. RsmH family.

The protein resides in the cytoplasm. It carries out the reaction cytidine(1402) in 16S rRNA + S-adenosyl-L-methionine = N(4)-methylcytidine(1402) in 16S rRNA + S-adenosyl-L-homocysteine + H(+). In terms of biological role, specifically methylates the N4 position of cytidine in position 1402 (C1402) of 16S rRNA. This is Ribosomal RNA small subunit methyltransferase H from Nitratiruptor sp. (strain SB155-2).